A 175-amino-acid polypeptide reads, in one-letter code: MVTYIVFVLSIIFVISFVGVSSKPSPIYGGLGLIVGGGAGCGVVLSFGGSFLGLMVFLIYLGGMLVVFGYTTAMATEQYPEVWVSNKVVLGAFILGLVVESLIVIYALKSGEVKIVFEFDGLGDWVIYDTGGSGVFSEEATGIAALYSYGVWLVIVTGWSLFVSVVIIMEITRGN.

5 helical membrane passes run 1–21, 25–45, 47–67, 88–108, and 149–169; these read MVTYIVFVLSIIFVISFVGVS, SPIYGGLGLIVGGGAGCGVVL, FGGSFLGLMVFLIYLGGMLVV, VVLGAFILGLVVESLIVIYAL, and YGVWLVIVTGWSLFVSVVIIM.

Belongs to the complex I subunit 6 family. Core subunit of respiratory chain NADH dehydrogenase (Complex I) which is composed of 45 different subunits.

The protein resides in the mitochondrion inner membrane. It catalyses the reaction a ubiquinone + NADH + 5 H(+)(in) = a ubiquinol + NAD(+) + 4 H(+)(out). Functionally, core subunit of the mitochondrial membrane respiratory chain NADH dehydrogenase (Complex I) which catalyzes electron transfer from NADH through the respiratory chain, using ubiquinone as an electron acceptor. Essential for the catalytic activity and assembly of complex I. This is NADH-ubiquinone oxidoreductase chain 6 (MT-ND6) from Balaenoptera musculus (Blue whale).